A 164-amino-acid polypeptide reads, in one-letter code: NADH-quinone oxidoreductase subunit I 1 (164 aa).

4Fe-4S ferredoxin-type domains follow at residues 54-84 (LRRY…IEAG) and 95-124 (VRYD…EGPN). Residues Cys-64, Cys-67, Cys-70, Cys-74, Cys-104, Cys-107, Cys-110, and Cys-114 each coordinate [4Fe-4S] cluster.

This sequence belongs to the complex I 23 kDa subunit family. As to quaternary structure, NDH-1 is composed of 14 different subunits. Subunits NuoA, H, J, K, L, M, N constitute the membrane sector of the complex. The cofactor is [4Fe-4S] cluster.

It is found in the cell inner membrane. The catalysed reaction is a quinone + NADH + 5 H(+)(in) = a quinol + NAD(+) + 4 H(+)(out). NDH-1 shuttles electrons from NADH, via FMN and iron-sulfur (Fe-S) centers, to quinones in the respiratory chain. The immediate electron acceptor for the enzyme in this species is believed to be ubiquinone. Couples the redox reaction to proton translocation (for every two electrons transferred, four hydrogen ions are translocated across the cytoplasmic membrane), and thus conserves the redox energy in a proton gradient. This chain is NADH-quinone oxidoreductase subunit I 1, found in Rhizobium meliloti (strain 1021) (Ensifer meliloti).